Reading from the N-terminus, the 30-residue chain is Fimbrial assembly protein, serogroup B1 (30 aa).

This is Fimbrial assembly protein, serogroup B1 (fimB) from Dichelobacter nodosus (Bacteroides nodosus).